We begin with the raw amino-acid sequence, 92 residues long: Sec-independent protein translocase protein TatA (92 aa).

A helical transmembrane segment spans residues 1-21; it reads MGIFDWKHWIVILVVVVLVFG. The segment at 43–92 is disordered; sequence MNDDEKPADPTVTPAQPVPPVQPQATAQANPPHTIDVQAQKVEEPIRKDV. Low complexity predominate over residues 65 to 74; sequence PQATAQANPP. Residues 83–92 are compositionally biased toward basic and acidic residues; sequence KVEEPIRKDV.

Belongs to the TatA/E family. As to quaternary structure, the Tat system comprises two distinct complexes: a TatABC complex, containing multiple copies of TatA, TatB and TatC subunits, and a separate TatA complex, containing only TatA subunits. Substrates initially bind to the TatABC complex, which probably triggers association of the separate TatA complex to form the active translocon.

Its subcellular location is the cell inner membrane. Its function is as follows. Part of the twin-arginine translocation (Tat) system that transports large folded proteins containing a characteristic twin-arginine motif in their signal peptide across membranes. TatA could form the protein-conducting channel of the Tat system. In Pseudomonas fluorescens (strain Pf0-1), this protein is Sec-independent protein translocase protein TatA.